We begin with the raw amino-acid sequence, 153 residues long: Putative riboflavin kinase (153 aa).

T28 and N30 together coordinate Mg(2+). Residue E80 is the Nucleophile of the active site.

As to quaternary structure, monomer. The cofactor is Zn(2+). Requires Mg(2+) as cofactor.

It is found in the cytoplasm. The catalysed reaction is riboflavin + ATP = FMN + ADP + H(+). The protein operates within cofactor biosynthesis; FMN biosynthesis; FMN from riboflavin (ATP route): step 1/1. Catalyzes the phosphorylation of riboflavin (vitamin B2) to form flavin-mononucleotide (FMN). This chain is Putative riboflavin kinase, found in Drosophila melanogaster (Fruit fly).